The following is a 426-amino-acid chain: MLDLKRIRNNSNEIKEALNNRGEKFDVTVIDEVLKLDEERRNILVKVEVLKSKRNQVSSEVPKLKKEGKDVSNIVAEMKNLSEEIKGFDATLAKIDEKIQYIMLRIPNIPNPQVPDGETDEDNIEIRNWLEPTKFDFEPKAHWDIGTNLNILDFERAGKVTGSRFTFYKGLGARLERAVISYFLDTHTEKHGYTEILPPYMVNRTSMIGTGQLPKFEEDAFKISEDDYFLIPTAEVPVTNLYRDEILKGDELPLKHVAYSACFRSEAGSAGRDTRGLVRQHQFNKVELVKFTKPEQSYEELEKLTNDAETVLKELGIPYRVVRICKGDLGFTAALKYDLEVWMPSYNRYVEISSCSNFEDFQARRANIRYKEDAKAKPQYVHTLNGSGVAIGRTVAAILENYQSEDGSVTIPEVLRPYMGGREVIK.

T233–E235 provides a ligand contact to L-serine. Residue R264 to E266 participates in ATP binding. Residue E287 participates in L-serine binding. E351–S354 is a binding site for ATP. S387 contacts L-serine.

It belongs to the class-II aminoacyl-tRNA synthetase family. Type-1 seryl-tRNA synthetase subfamily. In terms of assembly, homodimer. The tRNA molecule binds across the dimer.

Its subcellular location is the cytoplasm. The enzyme catalyses tRNA(Ser) + L-serine + ATP = L-seryl-tRNA(Ser) + AMP + diphosphate + H(+). It catalyses the reaction tRNA(Sec) + L-serine + ATP = L-seryl-tRNA(Sec) + AMP + diphosphate + H(+). The protein operates within aminoacyl-tRNA biosynthesis; selenocysteinyl-tRNA(Sec) biosynthesis; L-seryl-tRNA(Sec) from L-serine and tRNA(Sec): step 1/1. In terms of biological role, catalyzes the attachment of serine to tRNA(Ser). Is also able to aminoacylate tRNA(Sec) with serine, to form the misacylated tRNA L-seryl-tRNA(Sec), which will be further converted into selenocysteinyl-tRNA(Sec). The polypeptide is Serine--tRNA ligase (Clostridium botulinum (strain Okra / Type B1)).